The chain runs to 311 residues: Olfactory receptor 2A5 (311 aa).

Residues 1–24 (MTKNQTWVTEFILLGFPLSLRIQM) lie on the Extracellular side of the membrane. N-linked (GlcNAc...) asparagine glycosylation occurs at asparagine 4. The helical transmembrane segment at 25–48 (LLSGLFSLLYVFTLLGNGAILGLI) threads the bilayer. The Cytoplasmic portion of the chain corresponds to 49–56 (WLDSRLHT). A helical membrane pass occupies residues 57-78 (PMYFFLSHLAIIDISYASNNVP). Over 79 to 100 (KMLTNLGLNKRKTISFVPCTMQ) the chain is Extracellular. Cysteine 97 and cysteine 189 form a disulfide bridge. A helical transmembrane segment spans residues 101–120 (TFLYMAFAHTECLILVMMSY). Topologically, residues 121 to 139 (DRYMAICHPLQYSVIMRWG) are cytoplasmic. Residues 140–158 (VCTVLAVTSWACGSLLALV) traverse the membrane as a helical segment. The Extracellular segment spans residues 159–196 (HVVLILRLPFCGPHEINHFFCEILSVLKLACADTWLNQ). Residues 197 to 219 (VVIFAASVFILVGPLCLVLVSYS) traverse the membrane as a helical segment. Residues 220–236 (RILAAILRIQSGEGRRK) are Cytoplasmic-facing. Residues 237–259 (AFSTCSSHLCMVGLFFGSAIVMY) form a helical membrane-spanning segment. Over 260–272 (MAPKSRHPEEQQK) the chain is Extracellular. Residues 273-292 (VLSLFYSLFNPMLNPLIYSL) form a helical membrane-spanning segment. Residues 293-311 (RNAEVKGALKRVLWKQRSK) are Cytoplasmic-facing.

It belongs to the G-protein coupled receptor 1 family.

The protein resides in the cell membrane. Functionally, odorant receptor. This Homo sapiens (Human) protein is Olfactory receptor 2A5 (OR2A5).